The chain runs to 128 residues: MPKSVIIPAGSSAPLAPFVPGTLADGVVYVSGTLAFDQHNNVLFADDPKAQTRHVLETIRKVIETAGGTMADVTFNSIFITDWKNYAAINETYAEFFPGDKPARFCIQCGLVKPDALVEIATIAHIAK.

The protein belongs to the RutC family. Homotrimer.

It carries out the reaction (Z)-3-aminoacrylate + H2O + H(+) = 3-oxopropanoate + NH4(+). In terms of biological role, involved in pyrimidine catabolism. Catalyzes the deamination of 3-aminoacrylate to malonic semialdehyde, a reaction that can also occur spontaneously. RutC may facilitate the reaction and modulate the metabolic fitness, rather than catalyzing essential functions. The sequence is that of 3-aminoacrylate deaminase RutC from Escherichia coli O157:H7.